Consider the following 201-residue polypeptide: Glycerol-3-phosphate acyltransferase (201 aa).

The next 6 helical transmembrane spans lie at 3–23 (TVLF…VVVS), 51–71 (KAAI…VWLV), 85–105 (VALV…FRFV), 116–136 (VLLA…LVIA), 137–157 (YAFR…PFYY), and 158–178 (GLLF…ILLV).

This sequence belongs to the PlsY family. In terms of assembly, probably interacts with PlsX.

It localises to the cell inner membrane. It catalyses the reaction an acyl phosphate + sn-glycerol 3-phosphate = a 1-acyl-sn-glycero-3-phosphate + phosphate. The protein operates within lipid metabolism; phospholipid metabolism. Catalyzes the transfer of an acyl group from acyl-phosphate (acyl-PO(4)) to glycerol-3-phosphate (G3P) to form lysophosphatidic acid (LPA). This enzyme utilizes acyl-phosphate as fatty acyl donor, but not acyl-CoA or acyl-ACP. This chain is Glycerol-3-phosphate acyltransferase, found in Janthinobacterium sp. (strain Marseille) (Minibacterium massiliensis).